The following is a 307-amino-acid chain: Dihydroorotate dehydrogenase A (fumarate) (307 aa).

FMN-binding positions include Ser21 and 46-47 (KT). Substrate-binding positions include Lys46, 70 to 74 (NSVGL), and Asn130. Asn130 contacts FMN. The active-site Nucleophile is the Cys133. FMN contacts are provided by Lys168 and Ile194. 195–196 (NT) contributes to the substrate binding site. FMN is bound by residues Gly220, 246-247 (GG), and 268-269 (GS).

The protein belongs to the dihydroorotate dehydrogenase family. Type 1 subfamily. Homodimer. Requires FMN as cofactor.

Its subcellular location is the cytoplasm. It carries out the reaction (S)-dihydroorotate + fumarate = orotate + succinate. Its pathway is pyrimidine metabolism; UMP biosynthesis via de novo pathway. Functionally, catalyzes the conversion of dihydroorotate to orotate with fumarate as the electron acceptor. In Lactobacillus helveticus (strain DPC 4571), this protein is Dihydroorotate dehydrogenase A (fumarate) (pyrD).